The chain runs to 1397 residues: Clustered mitochondria protein homolog (1397 aa).

The TPR 1 repeat unit spans residues 30–63 (LPSFIDQKGDLKIPSHYEETITDLKLTLTVIPKT). Disordered regions lie at residues 158–203 (TARG…LSRE) and 526–555 (DAAP…DEEE). The span at 161 to 203 (GEAEKSDTNEEEQEQGKGKVGKPNEKESGETKETDSQPELSRE) shows a compositional bias: basic and acidic residues. In terms of domain architecture, Clu spans 368-640 (DSSRSQLMLI…RTTPRDIEFI (273 aa)). Residues 559–595 (EKVLYGLSSDSQKILEDKSFEKPLKLLSEVFHLKPHG) form a TPR 2 repeat. 4 stretches are compositionally biased toward basic and acidic residues: residues 686 to 703 (EGKL…EEKS), 812 to 831 (EKVE…KERA), 839 to 860 (SDDK…NTES), and 1019 to 1033 (QREQ…NVEK). 3 disordered regions span residues 686 to 707 (EGKL…QIAL), 812 to 869 (EKVE…EEQP), and 1019 to 1050 (QREQ…PIEN). A compositionally biased stretch (basic residues) spans 1034-1043 (KHSKKSKKKS). TPR repeat units lie at residues 1167 to 1200 (IAAY…WTST) and 1209 to 1242 (VNLL…CSHL). Polar residues-rich tracts occupy residues 1314 to 1338 (AQSK…SQAS) and 1362 to 1373 (PQSDPQIANQSV). Residues 1314–1397 (AQSKKSPPPT…AKSKSKHTKA (84 aa)) form a disordered region. The segment covering 1375–1384 (DILKFIEGKS) has biased composition (basic and acidic residues). Residues 1386–1397 (PNAKSKSKHTKA) show a composition bias toward basic residues.

Belongs to the CLU family. As to quaternary structure, may associate with the eukaryotic translation initiation factor 3 (eIF-3) complex.

It localises to the cytoplasm. Functionally, mRNA-binding protein involved in proper cytoplasmic distribution of mitochondria. This is Clustered mitochondria protein homolog from Lodderomyces elongisporus (strain ATCC 11503 / CBS 2605 / JCM 1781 / NBRC 1676 / NRRL YB-4239) (Yeast).